A 261-amino-acid chain; its full sequence is Ubiquinone biosynthesis O-methyltransferase (261 aa).

The segment at 1 to 22 is disordered; sequence MTMQVDPSANSSAASSAAPGTT. Residues 8 to 18 are compositionally biased toward low complexity; sequence SANSSAASSAA. Arg-55, Gly-86, Asp-107, and Met-149 together coordinate S-adenosyl-L-methionine.

Belongs to the methyltransferase superfamily. UbiG/COQ3 family.

The catalysed reaction is a 3-demethylubiquinol + S-adenosyl-L-methionine = a ubiquinol + S-adenosyl-L-homocysteine + H(+). The enzyme catalyses a 3-(all-trans-polyprenyl)benzene-1,2-diol + S-adenosyl-L-methionine = a 2-methoxy-6-(all-trans-polyprenyl)phenol + S-adenosyl-L-homocysteine + H(+). Its pathway is cofactor biosynthesis; ubiquinone biosynthesis. In terms of biological role, O-methyltransferase that catalyzes the 2 O-methylation steps in the ubiquinone biosynthetic pathway. The chain is Ubiquinone biosynthesis O-methyltransferase from Nitrobacter winogradskyi (strain ATCC 25391 / DSM 10237 / CIP 104748 / NCIMB 11846 / Nb-255).